The chain runs to 117 residues: Immunoglobulin heavy variable 3-7 (117 aa).

Positions Met1–Cys19 are cleaved as a signal peptide. Residues Glu20–Ser44 form a framework-1 region. An Ig-like domain is found at Glu20–Arg117. Residues Cys41 and Cys115 are joined by a disulfide bond. Residues Gly45–Trp52 form a complementarity-determining-1 region. Residues Met53 to Asn69 are framework-2. The tract at residues Ile70 to Lys77 is complementarity-determining-2. Positions Tyr78 to Cys115 are framework-3. Residues Ala116–Arg117 are complementarity-determining-3.

Immunoglobulins are composed of two identical heavy chains and two identical light chains; disulfide-linked.

It is found in the secreted. Its subcellular location is the cell membrane. Functionally, v region of the variable domain of immunoglobulin heavy chains that participates in the antigen recognition. Immunoglobulins, also known as antibodies, are membrane-bound or secreted glycoproteins produced by B lymphocytes. In the recognition phase of humoral immunity, the membrane-bound immunoglobulins serve as receptors which, upon binding of a specific antigen, trigger the clonal expansion and differentiation of B lymphocytes into immunoglobulins-secreting plasma cells. Secreted immunoglobulins mediate the effector phase of humoral immunity, which results in the elimination of bound antigens. The antigen binding site is formed by the variable domain of one heavy chain, together with that of its associated light chain. Thus, each immunoglobulin has two antigen binding sites with remarkable affinity for a particular antigen. The variable domains are assembled by a process called V-(D)-J rearrangement and can then be subjected to somatic hypermutations which, after exposure to antigen and selection, allow affinity maturation for a particular antigen. The sequence is that of Immunoglobulin heavy variable 3-7 from Homo sapiens (Human).